The following is a 220-amino-acid chain: Putative cobalt transport protein CbiM (220 aa).

The next 5 membrane-spanning stretches (helical) occupy residues 6-26 (GFLP…IVVY), 43-63 (ALVA…FPSV), 74-94 (GLLV…IVLL), 98-118 (LLLA…MGII), and 182-202 (IFTL…AAVI).

Belongs to the CbiM family. Forms an energy-coupling factor (ECF) transporter complex composed of an ATP-binding protein (A component, CbiO), a transmembrane protein (T component, CbiQ) and 2 possible substrate-capture proteins (S components, CbiM and CbiN) of unknown stoichimetry.

It is found in the cell membrane. Its pathway is cofactor biosynthesis; adenosylcobalamin biosynthesis. Its function is as follows. Part of the energy-coupling factor (ECF) transporter complex CbiMNOQ involved in cobalt import. This chain is Putative cobalt transport protein CbiM, found in Haloquadratum walsbyi (strain DSM 16790 / HBSQ001).